The sequence spans 303 residues: Proline dehydrogenase 2 (303 aa).

K96 is a substrate binding site. The active site involves D130. Residues M131 and Q159 each coordinate FAD. R180 is an active-site residue. Residues 183-185 (KGA) and 222-223 (TH) each bind FAD. 284 to 285 (RR) contacts substrate.

It belongs to the proline dehydrogenase family. The cofactor is FAD.

The catalysed reaction is L-proline + a quinone = (S)-1-pyrroline-5-carboxylate + a quinol + H(+). It functions in the pathway amino-acid degradation; L-proline degradation into L-glutamate; L-glutamate from L-proline: step 1/2. Functionally, converts proline to delta-1-pyrroline-5-carboxylate. Important for the use of proline as a sole carbon and energy source or a sole nitrogen source. This is Proline dehydrogenase 2 from Bacillus subtilis (strain 168).